We begin with the raw amino-acid sequence, 316 residues long: 4-hydroxy-3-methylbut-2-enyl diphosphate reductase (316 aa).

C12 contributes to the [4Fe-4S] cluster binding site. Residues H41 and H74 each coordinate (2E)-4-hydroxy-3-methylbut-2-enyl diphosphate. Positions 41 and 74 each coordinate dimethylallyl diphosphate. Isopentenyl diphosphate-binding residues include H41 and H74. A [4Fe-4S] cluster-binding site is contributed by C96. Residue H124 participates in (2E)-4-hydroxy-3-methylbut-2-enyl diphosphate binding. Dimethylallyl diphosphate is bound at residue H124. H124 is a binding site for isopentenyl diphosphate. E126 functions as the Proton donor in the catalytic mechanism. A (2E)-4-hydroxy-3-methylbut-2-enyl diphosphate-binding site is contributed by T167. C197 provides a ligand contact to [4Fe-4S] cluster. Residues S225, S226, N227, and S269 each contribute to the (2E)-4-hydroxy-3-methylbut-2-enyl diphosphate site. Residues S225, S226, N227, and S269 each coordinate dimethylallyl diphosphate. Isopentenyl diphosphate-binding residues include S225, S226, N227, and S269.

Belongs to the IspH family. In terms of assembly, homodimer. [4Fe-4S] cluster is required as a cofactor.

The enzyme catalyses isopentenyl diphosphate + 2 oxidized [2Fe-2S]-[ferredoxin] + H2O = (2E)-4-hydroxy-3-methylbut-2-enyl diphosphate + 2 reduced [2Fe-2S]-[ferredoxin] + 2 H(+). The catalysed reaction is dimethylallyl diphosphate + 2 oxidized [2Fe-2S]-[ferredoxin] + H2O = (2E)-4-hydroxy-3-methylbut-2-enyl diphosphate + 2 reduced [2Fe-2S]-[ferredoxin] + 2 H(+). It participates in isoprenoid biosynthesis; dimethylallyl diphosphate biosynthesis; dimethylallyl diphosphate from (2E)-4-hydroxy-3-methylbutenyl diphosphate: step 1/1. Its pathway is isoprenoid biosynthesis; isopentenyl diphosphate biosynthesis via DXP pathway; isopentenyl diphosphate from 1-deoxy-D-xylulose 5-phosphate: step 6/6. Its function is as follows. Catalyzes the conversion of 1-hydroxy-2-methyl-2-(E)-butenyl 4-diphosphate (HMBPP) into a mixture of isopentenyl diphosphate (IPP) and dimethylallyl diphosphate (DMAPP). Acts in the terminal step of the DOXP/MEP pathway for isoprenoid precursor biosynthesis. This chain is 4-hydroxy-3-methylbut-2-enyl diphosphate reductase, found in Salmonella paratyphi A (strain ATCC 9150 / SARB42).